The following is a 161-amino-acid chain: MSQLTHINAAGEAHMVDVSAKAETVREARAEAFVTMRSETLAMIVDGKHHKGDVFATARIAGIQAAKRTWELIPLCHPLLLSKVEIQLQAEPEYNRVRIESLCRLTGKTGVEMEALTAASVAALTIYDMCKAVQKDMVIGPVRLLAKSGGKSGDFKVDAHD.

Residues 75 to 77 (LCH) and 113 to 114 (ME) each bind substrate. The active site involves aspartate 128.

It belongs to the MoaC family. In terms of assembly, homohexamer; trimer of dimers.

It catalyses the reaction (8S)-3',8-cyclo-7,8-dihydroguanosine 5'-triphosphate = cyclic pyranopterin phosphate + diphosphate. The protein operates within cofactor biosynthesis; molybdopterin biosynthesis. Functionally, catalyzes the conversion of (8S)-3',8-cyclo-7,8-dihydroguanosine 5'-triphosphate to cyclic pyranopterin monophosphate (cPMP). In Salmonella dublin (strain CT_02021853), this protein is Cyclic pyranopterin monophosphate synthase.